A 261-amino-acid chain; its full sequence is UPF0328 protein ECU06_0100 (261 aa).

It belongs to the UPF0328 family.

The protein is UPF0328 protein ECU06_0100 of Encephalitozoon cuniculi (strain GB-M1) (Microsporidian parasite).